The following is a 164-amino-acid chain: MACDQQAELRRVFELFDRDGDGRITREELTESLERLGMPVHREELAATIARIDANGDGCVDMDEFTQLYETVMRVDGGGGGGGGACDVDEASMREAFDVFDRNGDGFITVDELGAVLASLGIKQGRTAEDCGRMIGQVDRDGDGRVDFLEFKQMMRGGAFATLR.

EF-hand domains are found at residues 4–39 (DQQA…LGMP), 40–75 (VHRE…VMRV), 88–123 (VDEA…LGIK), and 126–161 (RTAE…GAFA). Asp17, Asp19, Asp21, Arg23, Glu28, Asp53, Asn55, Asp57, Cys59, Glu64, Asp101, Asn103, Asp105, Glu112, Asp139, Asp141, Asp143, Arg145, and Glu150 together coordinate Ca(2+).

Functionally, potential calcium sensor. The sequence is that of Probable calcium-binding protein CML17 (CML17) from Oryza sativa subsp. japonica (Rice).